A 288-amino-acid polypeptide reads, in one-letter code: Syntaxin-1A (288 aa).

At 1–265 (MKDRTQELRT…KYQSKARRKK (265 aa)) the chain is on the cytoplasmic side. Residues Ser14, Ser64, and Ser95 each carry the phosphoserine modification. Residues 68–109 (DEKTKEELEELMSDIKKTANKVRSKLKSIEQSIEQEEGLNRS) adopt a coiled-coil conformation. Ser188 is subject to Phosphoserine; by DAPK1. Positions 192–254 (LSEIETRHSE…ERAVSDTKKA (63 aa)) constitute a t-SNARE coiled-coil homology domain. Glycyl lysine isopeptide (Lys-Gly) (interchain with G-Cter in SUMO) cross-links involve residues Lys252, Lys253, and Lys256. A helical; Anchor for type IV membrane protein transmembrane segment spans residues 266 to 286 (IMIIICCVILGIVIASTVGGI). Over 287 to 288 (FA) the chain is Extracellular.

Belongs to the syntaxin family. Part of the SNARE core complex containing SNAP25, VAMP2 and STX1A; this complex constitutes the basic catalytic machinery of the complex neurotransmitter release apparatus. The SNARE complex interacts with CPLX1. Interacts with STXBP1. The interaction with STXBP1 promotes assembly of the SNARE complex. Interacts (via C-terminus) with KCNB1 (via C-terminus); the interaction increases in a calcium-dependent manner and induces a pore-independent enhancement of exocytosis in neuroendocrine cells, chromaffin cells, pancreatic beta cells and from the soma of dorsal root ganglia (DRG) neurons. Interacts with SYTL4. Interacts with STXBP6. Interacts with PLCL1 (via C2 domain). Interacts with OTOF. Interacts with LGI3. Interacts (via the H3 domain) with SLC6A4 (via the N-terminus); this interaction regulates SLC4A6 channel conductance in thalamocortical neurons. Interacts with SYT6 and SYT8; the interaction is Ca(2+)-dependent. Interacts with VAMP8. Interacts with SNAP23. Interacts with VAPA and SYBU. Interacts with PRRT2. Interacts with SEPT8. Interacts with STXBP5L. Interacts with synaptotagmin-1/SYT1. Interacts with SEPTIN5; in the cerebellar cortex. Interacts with SEPTIN4; in the striatum. Post-translationally, phosphorylated by CK2. Phosphorylation at Ser-188 by DAPK1 significantly decreases its interaction with STXBP1. In terms of processing, sumoylated, sumoylation is required for regulation of synaptic vesicle endocytosis. Highly expressed in embryonic spinal cord and ganglia and in adult cerebellum and cerebral cortex. As to expression, expressed in heart, liver, fat, skeletal muscle, kidney and brain.

Its subcellular location is the cytoplasmic vesicle. It is found in the secretory vesicle. It localises to the synaptic vesicle membrane. The protein resides in the synapse. The protein localises to the synaptosome. Its subcellular location is the cell membrane. It is found in the secreted. Its function is as follows. Plays an essential role in hormone and neurotransmitter calcium-dependent exocytosis and endocytosis. Part of the SNARE (Soluble NSF Attachment Receptor) complex composed of SNAP25, STX1A and VAMP2 which mediates the fusion of synaptic vesicles with the presynaptic plasma membrane. STX1A and SNAP25 are localized on the plasma membrane while VAMP2 resides in synaptic vesicles. The pairing of the three SNAREs from the N-terminal SNARE motifs to the C-terminal anchors leads to the formation of the SNARE complex, which brings membranes into close proximity and results in final fusion. Participates in the calcium-dependent regulation of acrosomal exocytosis in sperm. Also plays an important role in the exocytosis of hormones such as insulin or glucagon-like peptide 1 (GLP-1). The protein is Syntaxin-1A (STX1A) of Homo sapiens (Human).